The sequence spans 123 residues: Ribonuclease P protein component (123 aa).

Belongs to the RnpA family. Consists of a catalytic RNA component (M1 or rnpB) and a protein subunit.

The catalysed reaction is Endonucleolytic cleavage of RNA, removing 5'-extranucleotides from tRNA precursor.. Its function is as follows. RNaseP catalyzes the removal of the 5'-leader sequence from pre-tRNA to produce the mature 5'-terminus. It can also cleave other RNA substrates such as 4.5S RNA. The protein component plays an auxiliary but essential role in vivo by binding to the 5'-leader sequence and broadening the substrate specificity of the ribozyme. This chain is Ribonuclease P protein component, found in Streptomyces bikiniensis.